The following is a 178-amino-acid chain: MPGSALLCCLLLLTGMRISRGQYSREDNNCTHFPVGQSHMLLELRTAFSQVKTFFQTKDQLDNILLTDSLMQDFKGYLGCQALSEMIQFYLVEVMPQAEKHGPEIKEHLNSLGEKLKTLRMRLRRCHRFLPCENKSKAVEQVKSDFNKLQDQGVYKAMNEFDIFINCIEAYMMIKMKS.

The signal sequence occupies residues 1–18 (MPGSALLCCLLLLTGMRI). N-linked (GlcNAc...) asparagine glycosylation occurs at Asn-29. Disulfide bonds link Cys-30-Cys-126 and Cys-80-Cys-132. N-linked (GlcNAc...) asparagine glycosylation occurs at Asn-134.

This sequence belongs to the IL-10 family. Homodimer. Interacts with IL10RA and IL10RB.

It is found in the secreted. Its function is as follows. Major immune regulatory cytokine that acts on many cells of the immune system where it has profound anti-inflammatory functions, limiting excessive tissue disruption caused by inflammation. Mechanistically, IL10 binds to its heterotetrameric receptor comprising IL10RA and IL10RB leading to JAK1 and STAT2-mediated phosphorylation of STAT3. In turn, STAT3 translocates to the nucleus where it drives expression of anti-inflammatory mediators. Targets antigen-presenting cells (APCs) such as macrophages and monocytes and inhibits their release of pro-inflammatory cytokines including granulocyte-macrophage colony-stimulating factor /GM-CSF, granulocyte colony-stimulating factor/G-CSF, IL-1 alpha, IL-1 beta, IL-6, IL-8 and TNF-alpha. Also interferes with antigen presentation by reducing the expression of MHC-class II and co-stimulatory molecules, thereby inhibiting their ability to induce T cell activation. In addition, controls the inflammatory response of macrophages by reprogramming essential metabolic pathways including mTOR signaling. In Mus musculus (Mouse), this protein is Interleukin-10 (Il10).